A 174-amino-acid polypeptide reads, in one-letter code: ATP-dependent protease subunit HslV (174 aa).

T2 is a catalytic residue. Residues A156, C159, and T162 each contribute to the Na(+) site.

Belongs to the peptidase T1B family. HslV subfamily. A double ring-shaped homohexamer of HslV is capped on each side by a ring-shaped HslU homohexamer. The assembly of the HslU/HslV complex is dependent on binding of ATP.

It localises to the cytoplasm. It carries out the reaction ATP-dependent cleavage of peptide bonds with broad specificity.. With respect to regulation, allosterically activated by HslU binding. Its function is as follows. Protease subunit of a proteasome-like degradation complex believed to be a general protein degrading machinery. The protein is ATP-dependent protease subunit HslV of Agrobacterium fabrum (strain C58 / ATCC 33970) (Agrobacterium tumefaciens (strain C58)).